Consider the following 187-residue polypeptide: Elongation factor P (187 aa).

At K34 the chain carries N6-(3,6-diaminohexanoyl)-5-hydroxylysine.

The protein belongs to the elongation factor P family. In terms of processing, may be beta-lysylated on the epsilon-amino group of Lys-34 by the combined action of EpmA and EpmB, and then hydroxylated on the C5 position of the same residue by EpmC (if this protein is present). Lysylation is critical for the stimulatory effect of EF-P on peptide-bond formation. The lysylation moiety may extend toward the peptidyltransferase center and stabilize the terminal 3-CCA end of the tRNA. Hydroxylation of the C5 position on Lys-34 may allow additional potential stabilizing hydrogen-bond interactions with the P-tRNA.

It localises to the cytoplasm. It functions in the pathway protein biosynthesis; polypeptide chain elongation. Its function is as follows. Involved in peptide bond synthesis. Alleviates ribosome stalling that occurs when 3 or more consecutive Pro residues or the sequence PPG is present in a protein, possibly by augmenting the peptidyl transferase activity of the ribosome. Modification of Lys-34 is required for alleviation. The chain is Elongation factor P from Thioalkalivibrio sulfidiphilus (strain HL-EbGR7).